Consider the following 1091-residue polypeptide: Rho GTPase-activating protein 7 (1091 aa).

The SAM domain occupies 11-78 (LTQIEAKEAC…LNKCAVMKLE (68 aa)). Residues S86, S89, and S129 each carry the phosphoserine modification. Disordered stretches follow at residues 120–181 (SPKQ…TTPR), 296–329 (RSVS…TRSL), 402–439 (RTGS…SSRM), and 491–552 (SDEG…SGVG). Residues 130–143 (PDNSRLQSATSRES) show a composition bias toward polar residues. Low complexity-rich tracts occupy residues 155–166 (SSIRSLSSTSSS) and 298–324 (VSNS…SPVT). The interval 274–447 (QLNCVEISAL…RMSIYDNVPG (174 aa)) is focal adhesion-targeting (FAT). S321 carries the post-translational modification Phosphoserine. Basic and acidic residues predominate over residues 414–425 (LRRENSSDSPKE). A compositionally biased stretch (polar residues) spans 499-511 (ALDSVSPCPSSPK). Positions 513 to 525 (IHLDVDHDRRTPS) are enriched in basic and acidic residues. Residues 526 to 535 (DLDSTGNSLN) show a composition bias toward polar residues. A polybasic cluster (PBR) region spans residues 614-636 (KHGFSWAVPKFMKRIKVPDYKDR). Residues 641–847 (VPLTVNVQRS…HMIAECKKLF (207 aa)) enclose the Rho-GAP domain. The START domain occupies 877-1084 (SNDQPADYRH…RDSFSNQSTE (208 aa)).

Interacts with EF1A1, facilitates EF1A1 distribution to the membrane periphery and ruffles upon growth factor stimulation and suppresses cell migration. Interacts with tensin TNS1 (via N-terminus); the interaction is decreased by phosphorylation of TNS1. Interacts with TNS3 and PTEN; in resting cells, interacts with TNS3 (via C2 tensin-type domain) but, following growth factor stimulation, TNS3 and PTEN are phosphorylated which leads to weakened interaction with TNS3 and enhanced interaction with PTEN. Interacts (via C-terminus) with tensin TNS4 (via SH2 domain); the interaction is independent of tyrosine phosphorylation of DLC1.

The protein localises to the cytoplasm. It localises to the cell junction. Its subcellular location is the focal adhesion. It is found in the membrane. Functionally, functions as a GTPase-activating protein for the small GTPases RHOA, RHOB, RHOC and CDC42, terminating their downstream signaling. This induces morphological changes and detachment through cytoskeletal reorganization, playing a critical role in biological processes such as cell migration and proliferation. Also functions in vivo as an activator of the phospholipase PLCD1. Active DLC1 increases cell migration velocity but reduces directionality. Required for growth factor-induced epithelial cell migration; in resting cells, interacts with TNS3 while PTEN interacts with the p85 regulatory subunit of the PI3K kinase complex but growth factor stimulation induces phosphorylation of TNS3 and PTEN, causing them to change their binding preference so that PTEN interacts with DLC1 and TNS3 interacts with p85. The PTEN-DLC1 complex translocates to the posterior of migrating cells to activate RHOA while the TNS3-p85 complex translocates to the leading edge of migrating cells to promote RAC1 activation. This is Rho GTPase-activating protein 7 (Dlc1) from Rattus norvegicus (Rat).